A 498-amino-acid polypeptide reads, in one-letter code: DNA-directed RNA polymerase subunit Rpo2N (498 aa).

It belongs to the RNA polymerase beta chain family. As to quaternary structure, part of the RNA polymerase complex.

The protein resides in the cytoplasm. It carries out the reaction RNA(n) + a ribonucleoside 5'-triphosphate = RNA(n+1) + diphosphate. DNA-dependent RNA polymerase (RNAP) catalyzes the transcription of DNA into RNA using the four ribonucleoside triphosphates as substrates. The Rpo2 subunit (Rpo2N and Rpo2C in this organism) is implicated in DNA promoter recognition and in nucleotide binding. This is DNA-directed RNA polymerase subunit Rpo2N from Methanocaldococcus jannaschii (strain ATCC 43067 / DSM 2661 / JAL-1 / JCM 10045 / NBRC 100440) (Methanococcus jannaschii).